A 366-amino-acid chain; its full sequence is Flagellar P-ring protein (366 aa).

The signal sequence occupies residues 1-24 (MWPLLLAVALSTLLPLAMPGSAGA).

It belongs to the FlgI family. As to quaternary structure, the basal body constitutes a major portion of the flagellar organelle and consists of four rings (L,P,S, and M) mounted on a central rod.

The protein resides in the periplasm. It localises to the bacterial flagellum basal body. Its function is as follows. Assembles around the rod to form the L-ring and probably protects the motor/basal body from shearing forces during rotation. The polypeptide is Flagellar P-ring protein (Nitratidesulfovibrio vulgaris (strain ATCC 29579 / DSM 644 / CCUG 34227 / NCIMB 8303 / VKM B-1760 / Hildenborough) (Desulfovibrio vulgaris)).